Consider the following 431-residue polypeptide: Glucose-1-phosphate adenylyltransferase (431 aa).

Lysine 39 is a beta-D-fructose 1,6-bisphosphate binding site. Arginine 40, histidine 46, and arginine 52 together coordinate AMP. Tyrosine 114 contacts alpha-D-glucose 1-phosphate. Arginine 130 is a binding site for AMP. Alpha-D-glucose 1-phosphate contacts are provided by residues glycine 179, 194-195 (EK), and serine 212. Positions 370 and 386 each coordinate AMP. Residues 419–423 (REMLR) and 429–431 (QER) contribute to the beta-D-fructose 1,6-bisphosphate site.

The protein belongs to the bacterial/plant glucose-1-phosphate adenylyltransferase family. In terms of assembly, homotetramer.

It catalyses the reaction alpha-D-glucose 1-phosphate + ATP + H(+) = ADP-alpha-D-glucose + diphosphate. It participates in glycan biosynthesis; glycogen biosynthesis. Its activity is regulated as follows. Allosterically activated by fructose-1,6-bisphosphate (F16BP) and inhibited by AMP. Functionally, involved in the biosynthesis of ADP-glucose, a building block required for the elongation reactions to produce glycogen. Catalyzes the reaction between ATP and alpha-D-glucose 1-phosphate (G1P) to produce pyrophosphate and ADP-Glc. In Escherichia coli O7:K1 (strain IAI39 / ExPEC), this protein is Glucose-1-phosphate adenylyltransferase.